The sequence spans 35 residues: Dolichyl-diphosphooligosaccharide--protein glycosyltransferase subunit 4B (35 aa).

The Lumenal portion of the chain corresponds to M1 to G8. The chain crosses the membrane as a helical span at residues F9–V29. Over A30–E35 the chain is Cytoplasmic.

This sequence belongs to the OST4 family. Component of the oligosaccharyltransferase (OST) complex.

The protein resides in the endoplasmic reticulum membrane. Functionally, subunit of the oligosaccharyl transferase (OST) complex that catalyzes the initial transfer of a defined glycan (Glc(3)Man(9)GlcNAc(2) in eukaryotes) from the lipid carrier dolichol-pyrophosphate to an asparagine residue within an Asn-X-Ser/Thr consensus motif in nascent polypeptide chains, the first step in protein N-glycosylation. N-glycosylation occurs cotranslationally and the complex associates with the Sec61 complex at the channel-forming translocon complex that mediates protein translocation across the endoplasmic reticulum (ER). All subunits are required for a maximal enzyme activity. This chain is Dolichyl-diphosphooligosaccharide--protein glycosyltransferase subunit 4B (OST4B), found in Arabidopsis thaliana (Mouse-ear cress).